The chain runs to 395 residues: Phosphoglycerate kinase (395 aa).

Residues 21–23, Arg-36, 59–62, Arg-113, and Arg-146 each bind substrate; these read DLN and HLGR. ATP-binding positions include Lys-197, Glu-324, and 350-353; that span reads GGDT.

It belongs to the phosphoglycerate kinase family. In terms of assembly, monomer.

It is found in the cytoplasm. It catalyses the reaction (2R)-3-phosphoglycerate + ATP = (2R)-3-phospho-glyceroyl phosphate + ADP. It functions in the pathway carbohydrate degradation; glycolysis; pyruvate from D-glyceraldehyde 3-phosphate: step 2/5. The protein is Phosphoglycerate kinase of Acinetobacter baumannii (strain ATCC 17978 / DSM 105126 / CIP 53.77 / LMG 1025 / NCDC KC755 / 5377).